The following is a 241-amino-acid chain: Probable transcriptional regulatory protein Neut_0281 (241 aa).

It belongs to the TACO1 family.

Its subcellular location is the cytoplasm. This Nitrosomonas eutropha (strain DSM 101675 / C91 / Nm57) protein is Probable transcriptional regulatory protein Neut_0281.